A 112-amino-acid chain; its full sequence is Putative pterin-4-alpha-carbinolamine dehydratase (112 aa).

The protein belongs to the pterin-4-alpha-carbinolamine dehydratase family.

It catalyses the reaction (4aS,6R)-4a-hydroxy-L-erythro-5,6,7,8-tetrahydrobiopterin = (6R)-L-erythro-6,7-dihydrobiopterin + H2O. The sequence is that of Putative pterin-4-alpha-carbinolamine dehydratase from Photobacterium profundum (strain SS9).